The sequence spans 175 residues: FMN reductase (NADH) RutF (175 aa).

This sequence belongs to the non-flavoprotein flavin reductase family. RutF subfamily.

It catalyses the reaction FMNH2 + NAD(+) = FMN + NADH + 2 H(+). In terms of biological role, catalyzes the reduction of FMN to FMNH2 which is used to reduce pyrimidine by RutA via the Rut pathway. The polypeptide is FMN reductase (NADH) RutF (Serratia proteamaculans (strain 568)).